The primary structure comprises 427 residues: V-type proton ATPase subunit C 2 (427 aa).

Residues 292-319 (HKVKVTPLGNPDRPAAGQTDRERESEGE) form a disordered region.

This sequence belongs to the V-ATPase C subunit family. In terms of assembly, V-ATPase is a heteromultimeric enzyme made up of two complexes: the ATP-hydrolytic V1 complex and the proton translocation V0 complex. The V1 complex consists of three catalytic AB heterodimers that form a heterohexamer, three peripheral stalks each consisting of EG heterodimers, one central rotor including subunits D and F, and the regulatory subunits C and H. The proton translocation complex V0 consists of the proton transport subunit a, a ring of proteolipid subunits c9c'', rotary subunit d, subunits e and f, and the accessory subunits ATP6AP1/Ac45 and ATP6AP2/PRR. In terms of tissue distribution, kidney and placenta.

Its function is as follows. Subunit of the V1 complex of vacuolar(H+)-ATPase (V-ATPase), a multisubunit enzyme composed of a peripheral complex (V1) that hydrolyzes ATP and a membrane integral complex (V0) that translocates protons. V-ATPase is responsible for acidifying and maintaining the pH of intracellular compartments and in some cell types, is targeted to the plasma membrane, where it is responsible for acidifying the extracellular environment. Subunit C is necessary for the assembly of the catalytic sector of the enzyme and is likely to have a specific function in its catalytic activity. This chain is V-type proton ATPase subunit C 2 (ATP6V1C2), found in Homo sapiens (Human).